A 269-amino-acid polypeptide reads, in one-letter code: Chromophore lyase CRL, chloroplastic (269 aa).

Residues 19-36 (ARGLVVKTLVLIGGALLI) form a helical membrane-spanning segment.

Belongs to the CpcT/CpeT biliprotein lyase family. Mostly expressed in shoot apices, to a lower extent, in leaves, inflorescence stems, buds and cotyledons, and, at low levels, in roots and siliques.

The protein resides in the plastid. Its subcellular location is the chloroplast outer membrane. Its function is as follows. Covalently attaches a chromophore to Cys residue(s) of phycobiliproteins. Required for plastid division, and involved in cell differentiation and regulation of the cell division plane. Maintenance of plastid homeostasis controls plant preconditioning to stress and stress acclimation. Functionally, confers sensitivity to cabbage leaf curl virus (CaLCuV), probably by supporting viral movement. In Arabidopsis thaliana (Mouse-ear cress), this protein is Chromophore lyase CRL, chloroplastic (CRL).